The primary structure comprises 644 residues: ATP-dependent zinc metalloprotease FtsH (644 aa).

The Cytoplasmic segment spans residues 1 to 4 (MAKN). Residues 5–25 (LILWLVIAVVLMSVFQSFGPS) form a helical membrane-spanning segment. At 26 to 98 (ESNGRKVDYS…VGEPPEEPSL (73 aa)) the chain is on the periplasmic side. Residues 99–119 (LASIFISWFPMLLLIGVWIFF) form a helical membrane-spanning segment. The Cytoplasmic portion of the chain corresponds to 120-644 (MRQMQGGGGK…NTMSEQLGDK (525 aa)). 192 to 199 (GPPGTGKT) provides a ligand contact to ATP. His-414 is a Zn(2+) binding site. Residue Glu-415 is part of the active site. Zn(2+)-binding residues include His-418 and Asp-492. Positions 598–644 (VRPPAGWEEPGASNNAGDNGSPKAPRPVDEPRTPNPGNTMSEQLGDK) are disordered. The span at 632–644 (NPGNTMSEQLGDK) shows a compositional bias: polar residues.

The protein in the central section; belongs to the AAA ATPase family. In the C-terminal section; belongs to the peptidase M41 family. As to quaternary structure, homohexamer. Zn(2+) is required as a cofactor.

Its subcellular location is the cell inner membrane. In terms of biological role, acts as a processive, ATP-dependent zinc metallopeptidase for both cytoplasmic and membrane proteins. Plays a role in the quality control of integral membrane proteins. This is ATP-dependent zinc metalloprotease FtsH from Escherichia coli O157:H7.